Here is a 437-residue protein sequence, read N- to C-terminus: MLKFHRNVKPQFGAFARYSSLGKHNSRKRVGIIRLAYGLTGIGLVGLAGFAWAQDRHEKTYQKKGVQVEGPWQFYVLTTLPLRTLSRWWGYVNRIEIPLWMRVPAFGLYSKIFGCNLTEADPDDVRQYKNLAEFFTRKLKPGARVIDPDAPIVIPADGKILNYGVIEGGQLEQVKGITYSLDALLGDEKLARLKRSHAIPSPDHIPHIRQEEFAKLNGIHYSLQDLMGHDHGERPSHVKDASAQHIDLLSSTKVAAKSQFTLFGSRETNCLYYAVIYLAPGDYHRFHSPTDWVVERRRHFSGELFSVSPFMARRLGNLFILNERVALMGRYKYGFMSMIPVGATNVGSIRIKFDKDLCTNQFGKLGPVGTFDEAVYTSSSSILHGHPLLRGDEVGNFELGSTVVLVFEAPADFEFLVKQGQKVRVGLPLGRVVPSSH.

Residues 1–18 (MLKFHRNVKPQFGAFARY) constitute a mitochondrion transit peptide. Residues 19–38 (SSLGKHNSRKRVGIIRLAYG) lie on the Mitochondrial matrix side of the membrane. A helical transmembrane segment spans residues 39–57 (LTGIGLVGLAGFAWAQDRH). Residues 58 to 437 (EKTYQKKGVQ…PLGRVVPSSH (380 aa)) are Mitochondrial intermembrane-facing. Active-site charge relay system; for autoendoproteolytic cleavage activity residues include Asp-157, His-287, and Ser-401. Ser-401 serves as the catalytic Schiff-base intermediate with substrate; via pyruvic acid; for decarboxylase activity. Pyruvic acid (Ser); by autocatalysis is present on Ser-401.

Belongs to the phosphatidylserine decarboxylase family. PSD-B subfamily. Eukaryotic type I sub-subfamily. In terms of assembly, heterodimer of a large membrane-associated beta subunit and a small pyruvoyl-containing alpha subunit. Requires pyruvate as cofactor. In terms of processing, is synthesized initially as an inactive proenzyme. Formation of the active enzyme involves a self-maturation process in which the active site pyruvoyl group is generated from an internal serine residue via an autocatalytic post-translational modification. Two non-identical subunits are generated from the proenzyme in this reaction, and the pyruvate is formed at the N-terminus of the alpha chain, which is derived from the carboxyl end of the proenzyme. The autoendoproteolytic cleavage occurs by a canonical serine protease mechanism, in which the side chain hydroxyl group of the serine supplies its oxygen atom to form the C-terminus of the beta chain, while the remainder of the serine residue undergoes an oxidative deamination to produce ammonia and the pyruvoyl prosthetic group on the alpha chain. During this reaction, the Ser that is part of the protease active site of the proenzyme becomes the pyruvoyl prosthetic group, which constitutes an essential element of the active site of the mature decarboxylase.

The protein resides in the mitochondrion. Its subcellular location is the mitochondrion inner membrane. The enzyme catalyses a 1,2-diacyl-sn-glycero-3-phospho-L-serine + H(+) = a 1,2-diacyl-sn-glycero-3-phosphoethanolamine + CO2. It functions in the pathway phospholipid metabolism; phosphatidylethanolamine biosynthesis; phosphatidylethanolamine from CDP-diacylglycerol: step 2/2. Catalyzes the formation of phosphatidylethanolamine (PtdEtn) from phosphatidylserine (PtdSer). Plays a central role in phospholipid metabolism and in the interorganelle trafficking of phosphatidylserine. Together with psd2 and psd3, responsible for the majority of phosphatidylethanolamine synthesis. This chain is Phosphatidylserine decarboxylase proenzyme 1, mitochondrial, found in Schizosaccharomyces pombe (strain 972 / ATCC 24843) (Fission yeast).